Here is a 221-residue protein sequence, read N- to C-terminus: 7-cyano-7-deazaguanine synthase (221 aa).

10 to 20 serves as a coordination point for ATP; that stretch reads FSGGQDSTTCL. 4 residues coordinate Zn(2+): C187, C196, C199, and C202.

Belongs to the QueC family. Homodimer. The cofactor is Zn(2+).

It carries out the reaction 7-carboxy-7-deazaguanine + NH4(+) + ATP = 7-cyano-7-deazaguanine + ADP + phosphate + H2O + H(+). Its pathway is purine metabolism; 7-cyano-7-deazaguanine biosynthesis. Catalyzes the ATP-dependent conversion of 7-carboxy-7-deazaguanine (CDG) to 7-cyano-7-deazaguanine (preQ(0)). The protein is 7-cyano-7-deazaguanine synthase of Shouchella clausii (strain KSM-K16) (Alkalihalobacillus clausii).